Consider the following 262-residue polypeptide: Acyl-[acyl-carrier-protein]--UDP-N-acetylglucosamine O-acyltransferase (262 aa).

This sequence belongs to the transferase hexapeptide repeat family. LpxA subfamily. Homotrimer.

The protein resides in the cytoplasm. The enzyme catalyses a (3R)-hydroxyacyl-[ACP] + UDP-N-acetyl-alpha-D-glucosamine = a UDP-3-O-[(3R)-3-hydroxyacyl]-N-acetyl-alpha-D-glucosamine + holo-[ACP]. It functions in the pathway glycolipid biosynthesis; lipid IV(A) biosynthesis; lipid IV(A) from (3R)-3-hydroxytetradecanoyl-[acyl-carrier-protein] and UDP-N-acetyl-alpha-D-glucosamine: step 1/6. Involved in the biosynthesis of lipid A, a phosphorylated glycolipid that anchors the lipopolysaccharide to the outer membrane of the cell. This is Acyl-[acyl-carrier-protein]--UDP-N-acetylglucosamine O-acyltransferase from Sodalis glossinidius (strain morsitans).